Consider the following 183-residue polypeptide: Ribosome rescue factor SmrB (183 aa).

The Smr domain occupies 98–173 (LDLHGLTQLQ…GDAALLVLIE (76 aa)).

It belongs to the SmrB family. In terms of assembly, associates with collided ribosomes, but not with correctly translating polysomes.

Functionally, acts as a ribosome collision sensor. Detects stalled/collided disomes (pairs of ribosomes where the leading ribosome is stalled and a second ribosome has collided with it) and endonucleolytically cleaves mRNA at the 5' boundary of the stalled ribosome. Stalled/collided disomes form a new interface (primarily via the 30S subunits) that binds SmrB. Cleaved mRNA becomes available for tmRNA ligation, leading to ribosomal subunit dissociation and rescue of stalled ribosomes. The sequence is that of Ribosome rescue factor SmrB from Salmonella agona (strain SL483).